The chain runs to 346 residues: Heat-inducible transcription repressor HrcA (346 aa).

The protein belongs to the HrcA family.

In terms of biological role, negative regulator of class I heat shock genes (grpE-dnaK-dnaJ and groELS operons). Prevents heat-shock induction of these operons. The sequence is that of Heat-inducible transcription repressor HrcA from Kineococcus radiotolerans (strain ATCC BAA-149 / DSM 14245 / SRS30216).